We begin with the raw amino-acid sequence, 312 residues long: MDIIFYHPTFDTPYWINALTAALPGARVREWKRGDNEHADYALVWHPPVEMLQGRDLKAVFALGAGVDSILSKLKAHPEMLPEHIPLFRLEDTGMGQQMQEYAVSQVLHWFRRFDDYQALKQKSHWEPLADYQREDFTIGILGAGVLGSKVAEALAPWGFPLRCWSRSRKTYPGVQSFAGADELPAFLKGTRVLINLLPNTAETVGIINKGLLNQLADESYLMNLARGVHVIEEDLIDALNTGKLKGAMLDVYSSEPLPVESPLWAHPRVAMTPHIAAVTRPAEAVAYIARTIEHLEQGKAATRQVNRQLGY.

The active site involves R227. H275 functions as the Proton donor in the catalytic mechanism.

This sequence belongs to the D-isomer specific 2-hydroxyacid dehydrogenase family. GhrA subfamily.

The protein localises to the cytoplasm. The catalysed reaction is glycolate + NADP(+) = glyoxylate + NADPH + H(+). It catalyses the reaction (R)-glycerate + NAD(+) = 3-hydroxypyruvate + NADH + H(+). The enzyme catalyses (R)-glycerate + NADP(+) = 3-hydroxypyruvate + NADPH + H(+). Functionally, catalyzes the NADPH-dependent reduction of glyoxylate and hydroxypyruvate into glycolate and glycerate, respectively. The polypeptide is Glyoxylate/hydroxypyruvate reductase A (Enterobacter sp. (strain 638)).